We begin with the raw amino-acid sequence, 109 residues long: Phosphoribosyl-ATP pyrophosphatase (109 aa).

This sequence belongs to the PRA-PH family.

The protein localises to the cytoplasm. It catalyses the reaction 1-(5-phospho-beta-D-ribosyl)-ATP + H2O = 1-(5-phospho-beta-D-ribosyl)-5'-AMP + diphosphate + H(+). Its pathway is amino-acid biosynthesis; L-histidine biosynthesis; L-histidine from 5-phospho-alpha-D-ribose 1-diphosphate: step 2/9. The sequence is that of Phosphoribosyl-ATP pyrophosphatase from Sphingopyxis alaskensis (strain DSM 13593 / LMG 18877 / RB2256) (Sphingomonas alaskensis).